The chain runs to 682 residues: Potassium-transporting ATPase ATP-binding subunit (682 aa).

Helical transmembrane passes span 34 to 54, 62 to 82, 219 to 239, and 254 to 274; these read PVMF…IAMA, ALFS…ANFA, IALT…TATL, and VLVA…LSAI. Residue Asp-307 is the 4-aspartylphosphate intermediate of the active site. ATP contacts are provided by residues Asp-344, Glu-348, 377–384, and Lys-395; that span reads FTAQSRMS. Mg(2+) is bound by residues Asp-518 and Asp-522. Helical transmembrane passes span 588-608, 616-636, and 656-676; these read FAII…LNIM, AILS…PLAL, and IYGL…DLLL.

This sequence belongs to the cation transport ATPase (P-type) (TC 3.A.3) family. Type IA subfamily. The system is composed of three essential subunits: KdpA, KdpB and KdpC.

It localises to the cell inner membrane. The catalysed reaction is K(+)(out) + ATP + H2O = K(+)(in) + ADP + phosphate + H(+). Its function is as follows. Part of the high-affinity ATP-driven potassium transport (or Kdp) system, which catalyzes the hydrolysis of ATP coupled with the electrogenic transport of potassium into the cytoplasm. This subunit is responsible for energy coupling to the transport system and for the release of the potassium ions to the cytoplasm. The chain is Potassium-transporting ATPase ATP-binding subunit from Escherichia coli O6:K15:H31 (strain 536 / UPEC).